The following is a 141-amino-acid chain: Small ribosomal subunit protein bS6 (141 aa).

The tract at residues 110–141 (SRTKVSDQPAAVEAAEAPAAPAAQEESAPASA) is disordered. The segment covering 117–141 (QPAAVEAAEAPAAPAAQEESAPASA) has biased composition (low complexity).

It belongs to the bacterial ribosomal protein bS6 family.

Its function is as follows. Binds together with bS18 to 16S ribosomal RNA. This Acidobacterium capsulatum (strain ATCC 51196 / DSM 11244 / BCRC 80197 / JCM 7670 / NBRC 15755 / NCIMB 13165 / 161) protein is Small ribosomal subunit protein bS6.